We begin with the raw amino-acid sequence, 365 residues long: tRNA-specific 2-thiouridylase MnmA (365 aa).

Residues 6-13 and methionine 32 each bind ATP; that span reads GMSGGVDS. The segment at 92–94 is interaction with target base in tRNA; it reads NPD. Cysteine 97 (nucleophile) is an active-site residue. A disulfide bridge links cysteine 97 with cysteine 197. Position 121 (glycine 121) interacts with ATP. The tract at residues 147–149 is interaction with tRNA; that stretch reads KDQ. Cysteine 197 functions as the Cysteine persulfide intermediate in the catalytic mechanism. The interaction with tRNA stretch occupies residues 315–316; sequence RY.

It belongs to the MnmA/TRMU family.

It localises to the cytoplasm. The catalysed reaction is S-sulfanyl-L-cysteinyl-[protein] + uridine(34) in tRNA + AH2 + ATP = 2-thiouridine(34) in tRNA + L-cysteinyl-[protein] + A + AMP + diphosphate + H(+). Catalyzes the 2-thiolation of uridine at the wobble position (U34) of tRNA, leading to the formation of s(2)U34. The polypeptide is tRNA-specific 2-thiouridylase MnmA (Azoarcus sp. (strain BH72)).